The following is a 629-amino-acid chain: tRNA uridine 5-carboxymethylaminomethyl modification enzyme MnmG (629 aa).

Residue 13–18 coordinates FAD; it reads GGGHAG. 273–287 lines the NAD(+) pocket; sequence GPRYCPSIEDKIHRF.

The protein belongs to the MnmG family. Homodimer. Heterotetramer of two MnmE and two MnmG subunits. Requires FAD as cofactor.

The protein resides in the cytoplasm. Its function is as follows. NAD-binding protein involved in the addition of a carboxymethylaminomethyl (cmnm) group at the wobble position (U34) of certain tRNAs, forming tRNA-cmnm(5)s(2)U34. The polypeptide is tRNA uridine 5-carboxymethylaminomethyl modification enzyme MnmG (Shewanella baltica (strain OS195)).